We begin with the raw amino-acid sequence, 110 residues long: Late cornified envelope-like proline-rich protein 1 (110 aa).

Positions 1 to 24 are disordered; sequence MSSDDKNKPGEPKNEPKQCDPGCE.

This sequence belongs to the cornifin (SPRR) family.

The polypeptide is Late cornified envelope-like proline-rich protein 1 (LELP1) (Bos taurus (Bovine)).